The primary structure comprises 649 residues: Mediator of RNA polymerase II transcription subunit 17 (649 aa).

Positions 51-79 are disordered; that stretch reads QGSGSEEEEAAGPDGDAPDWGGAGADQDD.

The protein belongs to the Mediator complex subunit 17 family. Component of the Mediator complex, which is composed of MED1, MED4, MED6, MED7, MED8, MED9, MED10, MED11, MED12, MED13, MED13L, MED14, MED15, MED16, MED17, MED18, MED19, MED20, MED21, MED22, MED23, MED24, MED25, MED26, MED27, MED29, MED30, MED31, CCNC, CDK8 and CDC2L6/CDK11. The MED12, MED13, CCNC and CDK8 subunits form a distinct module termed the CDK8 module. Mediator containing the CDK8 module is less active than Mediator lacking this module in supporting transcriptional activation. Individual preparations of the Mediator complex lacking one or more distinct subunits have been variously termed ARC, CRSP, DRIP, PC2, SMCC and TRAP. Interacts with STAT2. Interacts with GATA1 and PPARG.

The protein localises to the nucleus. Its function is as follows. Component of the Mediator complex, a coactivator involved in the regulated transcription of nearly all RNA polymerase II-dependent genes. Mediator functions as a bridge to convey information from gene-specific regulatory proteins to the basal RNA polymerase II transcription machinery. Mediator is recruited to promoters by direct interactions with regulatory proteins and serves as a scaffold for the assembly of a functional preinitiation complex with RNA polymerase II and the general transcription factors. This Mus musculus (Mouse) protein is Mediator of RNA polymerase II transcription subunit 17 (Med17).